Here is a 302-residue protein sequence, read N- to C-terminus: Bifunctional protein FolD (302 aa).

NADP(+)-binding positions include 165–167, S190, and I231; that span reads GRS.

This sequence belongs to the tetrahydrofolate dehydrogenase/cyclohydrolase family. Homodimer.

The enzyme catalyses (6R)-5,10-methylene-5,6,7,8-tetrahydrofolate + NADP(+) = (6R)-5,10-methenyltetrahydrofolate + NADPH. It catalyses the reaction (6R)-5,10-methenyltetrahydrofolate + H2O = (6R)-10-formyltetrahydrofolate + H(+). It functions in the pathway one-carbon metabolism; tetrahydrofolate interconversion. Its function is as follows. Catalyzes the oxidation of 5,10-methylenetetrahydrofolate to 5,10-methenyltetrahydrofolate and then the hydrolysis of 5,10-methenyltetrahydrofolate to 10-formyltetrahydrofolate. In Prochlorococcus marinus (strain MIT 9313), this protein is Bifunctional protein FolD.